The sequence spans 71 residues: uncharacterized protein (71 aa).

A signal peptide spans 1–23 (MTLLIILILKYLLCLENLKNISL). N-linked (GlcNAc...) asparagine glycosylation is found at Asn-20, Asn-28, Asn-44, and Asn-50.

The protein resides in the secreted. This is an uncharacterized protein from Dictyostelium discoideum (Social amoeba).